The following is a 411-amino-acid chain: MFHPRARTMLLLSLPALIIGVASSLVLIAAMKVASVFQQFLWQRLPTNIGIAYDSPFWIVGMLTLTGVVVGLIIRYSPGHAGPDPAIEPLISMPVSPSALPGLLLALIIGLAGGVSLGPEHPIMTINIALAAAFGSRLFPRITALDWTILASAGTIGALFGTPVAAALIFSQTLSGSNDIPMWDRLFAPLMAAAAGSLTTSLFFHPHFSLPIAHYTQMRLVDIASGAIVAAIAIAAGMVAVWCLPRLHELLHRLKNPVLILGIGGFILGILGVIGGPLTLFKGLDEMQQMAFSQTLGAGDYFTLAVVKLAALVIAAASGFRGGRIFPAVFIGAALGLMLHAHVEAVPAAITVSCAILGLVLVVTRDGWLSLFMAAVVVPDTNLLPLLCIVMLPAWLLLAGKPLLAANRHEP.

11 consecutive transmembrane segments (helical) span residues 9 to 29 (MLLLSLPALIIGVASSLVLIA), 54 to 74 (DSPFWIVGMLTLTGVVVGLII), 99 to 119 (ALPGLLLALIIGLAGGVSLGP), 149 to 169 (ILASAGTIGALFGTPVAAALI), 186 to 206 (LFAPLMAAAAGSLTTSLFFHP), 223 to 243 (IASGAIVAAIAIAAGMVAVWC), 258 to 278 (VLILGIGGFILGILGVIGGPL), 296 to 316 (LGAGDYFTLAVVKLAALVIAA), 322 to 342 (GGRIFPAVFIGAALGLMLHAH), 343 to 363 (VEAVPAAITVSCAILGLVLVV), and 386 to 406 (LLCIVMLPAWLLLAGKPLLAA).

It belongs to the chloride channel (TC 2.A.49) family.

Its subcellular location is the cell membrane. This chain is Putative ion-transport protein YfeO, found in Salmonella choleraesuis (strain SC-B67).